The primary structure comprises 256 residues: POU domain class 2-associating factor 1 (256 aa).

Residues 1-24 (MLWQKSTAPEQAPAPPRPYQGVRV) form a disordered region. The OCA domain occupies 16 to 38 (PRPYQGVRVKEPVKELLRRKRGH).

The protein belongs to the POU2AF family. As to quaternary structure, interacts with POU2F1/OCT1 and POU2F2/OCT2; the interaction increases POU2F1 and POU2F2 transactivation activity. In terms of processing, ubiquitinated; mediated by SIAH1 or SIAH2 and leading to its subsequent proteasomal degradation. B-cell specific.

The protein resides in the nucleus. Its function is as follows. Transcriptional coactivator that specifically associates with either POU2F1/OCT1 or POU2F2/OCT2. It boosts the POU2F1/OCT1 mediated promoter activity and to a lesser extent, that of POU2F2/OCT2. It recognizes the POU domains of POU2F1/OCT1 and POU2F2/OCT2. It is essential for the response of B-cells to antigens and required for the formation of germinal centers. Regulates IL6 expression in B cells as POU2F2/OCT2 coactivator. This Mus musculus (Mouse) protein is POU domain class 2-associating factor 1.